A 613-amino-acid chain; its full sequence is Cysteine--tRNA ligase (613 aa).

Residues Met1 to Asn130 are disordered. Repeat copies occupy residues Pro36–Val49, Pro50–Val63, Pro64–Val77, Pro78–Val91, Pro92–Val105, and Pro106–Val119. The 6 X 14 AA tandem repeats of P-[TA]-R-G-D-K-K-R-A-[RP]-R-[PL]-G-V stretch occupies residues Pro36–Val119. The interval Val148–Arg613 is cysteinyl-tRNA synthetase. Cys176 serves as a coordination point for Zn(2+). Residues Ala178–His188 carry the 'HIGH' region motif. The Zn(2+) site is built by Cys355, His380, and Glu384. The 'KMSKS' region signature appears at Lys411–Ser415. Lys414 serves as a coordination point for ATP.

This sequence belongs to the class-I aminoacyl-tRNA synthetase family. As to quaternary structure, monomer. It depends on Zn(2+) as a cofactor.

The protein localises to the cytoplasm. The catalysed reaction is tRNA(Cys) + L-cysteine + ATP = L-cysteinyl-tRNA(Cys) + AMP + diphosphate. This is Cysteine--tRNA ligase from Streptomyces coelicolor (strain ATCC BAA-471 / A3(2) / M145).